Consider the following 736-residue polypeptide: 1,4-alpha-glucan branching enzyme GlgB (736 aa).

The active-site Nucleophile is the Asp417. Catalysis depends on Glu470, which acts as the Proton donor.

It belongs to the glycosyl hydrolase 13 family. GlgB subfamily. Monomer.

It catalyses the reaction Transfers a segment of a (1-&gt;4)-alpha-D-glucan chain to a primary hydroxy group in a similar glucan chain.. It functions in the pathway glycan biosynthesis; glycogen biosynthesis. Its function is as follows. Catalyzes the formation of the alpha-1,6-glucosidic linkages in glycogen by scission of a 1,4-alpha-linked oligosaccharide from growing alpha-1,4-glucan chains and the subsequent attachment of the oligosaccharide to the alpha-1,6 position. The protein is 1,4-alpha-glucan branching enzyme GlgB of Pseudomonas putida (strain ATCC 47054 / DSM 6125 / CFBP 8728 / NCIMB 11950 / KT2440).